We begin with the raw amino-acid sequence, 144 residues long: Vasopressin-neurophysin 2-copeptin (144 aa).

Cys1 and Cys6 are joined by a disulfide. Gly9 carries the post-translational modification Glycine amide. 7 disulfide bridges follow: Cys22–Cys66, Cys25–Cys39, Cys33–Cys56, Cys40–Cys46, Cys73–Cys85, Cys79–Cys97, and Cys86–Cys91. Residue Asn112 is glycosylated (N-linked (GlcNAc...) asparagine).

Belongs to the vasopressin/oxytocin family. Interacts with vasopressin receptors V1bR/AVPR1B (Ki=85 pM), V1aR/AVPR1A (Ki=0.6 nM) and V2R/AVPR2 (Ki=4.9 nM). Interacts with oxytocin receptor (OXTR) (Ki=110 nM).

The protein resides in the secreted. In terms of biological role, neurophysin 2 specifically binds vasopressin. Its function is as follows. Vasopressin has a direct antidiuretic action on the kidney, it also causes vasoconstriction of the peripheral vessels. Acts by binding to vasopressin receptors (V1bR/AVPR1B, V1aR/AVPR1A, and V2R/AVPR2). This chain is Vasopressin-neurophysin 2-copeptin (AVP), found in Cavia porcellus (Guinea pig).